The primary structure comprises 298 residues: Glycine--tRNA ligase alpha subunit (298 aa).

It belongs to the class-II aminoacyl-tRNA synthetase family. As to quaternary structure, tetramer of two alpha and two beta subunits.

Its subcellular location is the cytoplasm. It carries out the reaction tRNA(Gly) + glycine + ATP = glycyl-tRNA(Gly) + AMP + diphosphate. This Helicobacter pylori (strain P12) protein is Glycine--tRNA ligase alpha subunit.